A 444-amino-acid polypeptide reads, in one-letter code: MGDFLASIWWMIVSFSVLVTFHEFGHYWVARRCGVKVLRFSIGFGTPLWSRRSSSGTEFVIGAIPLGGYVKMLDEREADVTVAERNQAFNRKSVWQRIAIVAAGPLANLLLCMLLLWVLFVIGKQDYSATVGRAEHLAAQAGIHPGDRITAIDGRQVTSWSEASMLLTAAAMDRQNAVLSVIGPYGERSEHTLELSKLKQPFDERHVTALVGINWQFMLQPPIIAKIEPGSIAEGAIKPGDIVLAVDGQQTLSTEDLYNQIQKLGRDGHPGMIEIRRGEERLALELSPRKSAQGVWLLGVKTNPGPVPAFDSQQRYGVLAAVPLAIRETARMTADSLGMMKRIITGQASAKNISGPISIAKIANASAKRGVGWFIYFLSLLSLSLAIINLFPIPILDGGHLLYYAIELLKGSPLSTRAMAAGQYIGLALLAGLMGLAFYNDLLG.

His22 serves as a coordination point for Zn(2+). Glu23 is an active-site residue. His26 is a Zn(2+) binding site. Residues 98 to 120 (IAIVAAGPLANLLLCMLLLWVLF) traverse the membrane as a helical segment. One can recognise a PDZ domain in the interval 192–278 (TLELSKLKQP…HPGMIEIRRG (87 aa)). Transmembrane regions (helical) follow at residues 371–393 (VGWFIYFLSLLSLSLAIINLFPI) and 418–440 (AMAAGQYIGLALLAGLMGLAFYN).

The protein belongs to the peptidase M50B family. Zn(2+) serves as cofactor.

Its subcellular location is the cell inner membrane. This is Putative zinc metalloprotease PD_0327 from Xylella fastidiosa (strain Temecula1 / ATCC 700964).